We begin with the raw amino-acid sequence, 126 residues long: Arginine decarboxylase proenzyme (126 aa).

The active-site Schiff-base intermediate with substrate; via pyruvic acid is the Ser-74. A Pyruvic acid (Ser); by autocatalysis modification is found at Ser-74. The active-site Proton acceptor; for processing activity is the His-79. Cys-94 acts as the Proton donor; for catalytic activity in catalysis.

Belongs to the prokaryotic AdoMetDC family. Type 1 subfamily. In terms of assembly, heterooctamer of four alpha and four beta chains arranged as a tetramer of alpha/beta heterodimers. The cofactor is pyruvate. Is synthesized initially as an inactive proenzyme. Formation of the active enzyme involves a self-maturation process in which the active site pyruvoyl group is generated from an internal serine residue via an autocatalytic post-translational modification. Two non-identical subunits are generated from the proenzyme in this reaction, and the pyruvate is formed at the N-terminus of the alpha chain, which is derived from the carboxyl end of the proenzyme. The post-translation cleavage follows an unusual pathway, termed non-hydrolytic serinolysis, in which the side chain hydroxyl group of the serine supplies its oxygen atom to form the C-terminus of the beta chain, while the remainder of the serine residue undergoes an oxidative deamination to produce ammonia and the pyruvoyl group blocking the N-terminus of the alpha chain.

The enzyme catalyses L-arginine + H(+) = agmatine + CO2. The protein operates within amine and polyamine biosynthesis; agmatine biosynthesis; agmatine from L-arginine: step 1/1. Specifically catalyzes the decarboxylation of L-arginine to agmatine. Has no S-adenosylmethionine decarboxylase (AdoMetDC) activity. The protein is Arginine decarboxylase proenzyme of Pyrobaculum islandicum (strain DSM 4184 / JCM 9189 / GEO3).